A 515-amino-acid polypeptide reads, in one-letter code: 1-pyrroline-5-carboxylate dehydrogenase (515 aa).

Active-site residues include Glu-286 and Cys-320.

This sequence belongs to the aldehyde dehydrogenase family. RocA subfamily.

The catalysed reaction is L-glutamate 5-semialdehyde + NAD(+) + H2O = L-glutamate + NADH + 2 H(+). The protein operates within amino-acid degradation; L-proline degradation into L-glutamate; L-glutamate from L-proline: step 2/2. The polypeptide is 1-pyrroline-5-carboxylate dehydrogenase (Geobacillus kaustophilus (strain HTA426)).